The chain runs to 239 residues: 4-hydroxy-tetrahydrodipicolinate reductase (239 aa).

Residues Asp32, 73 to 75, and 98 to 101 each bind NAD(+); these read GTT and ASNF. His133 acts as the Proton donor/acceptor in catalysis. His134 contacts (S)-2,3,4,5-tetrahydrodipicolinate. Lys137 (proton donor) is an active-site residue. 143-144 contributes to the (S)-2,3,4,5-tetrahydrodipicolinate binding site; sequence GT.

Belongs to the DapB family.

Its subcellular location is the cytoplasm. The enzyme catalyses (S)-2,3,4,5-tetrahydrodipicolinate + NAD(+) + H2O = (2S,4S)-4-hydroxy-2,3,4,5-tetrahydrodipicolinate + NADH + H(+). It carries out the reaction (S)-2,3,4,5-tetrahydrodipicolinate + NADP(+) + H2O = (2S,4S)-4-hydroxy-2,3,4,5-tetrahydrodipicolinate + NADPH + H(+). It participates in amino-acid biosynthesis; L-lysine biosynthesis via DAP pathway; (S)-tetrahydrodipicolinate from L-aspartate: step 4/4. Catalyzes the conversion of 4-hydroxy-tetrahydrodipicolinate (HTPA) to tetrahydrodipicolinate. This is 4-hydroxy-tetrahydrodipicolinate reductase from Christiangramia forsetii (strain DSM 17595 / CGMCC 1.15422 / KT0803) (Gramella forsetii).